Here is a 21-residue protein sequence, read N- to C-terminus: Peptide PGLa-BM2 (21 aa).

At Ala-21 the chain carries Alanine amide.

In terms of tissue distribution, expressed by the skin glands.

It localises to the secreted. In terms of biological role, antimicrobial peptide. This Xenopus boumbaensis (Mawa clawed frog) protein is Peptide PGLa-BM2.